We begin with the raw amino-acid sequence, 787 residues long: Protein PAT1 homolog 2 (787 aa).

Disordered stretches follow at residues 94–120, 134–221, 338–374, 411–445, and 765–787; these read KHLG…WTQD, EQVQ…NASP, VREH…GLQF, LAKK…QQPQ, and VSES…FVRG. A compositionally biased stretch (polar residues) spans 105–120; it reads GSFSRESSTATDWTQD. Positions 142–153 are enriched in low complexity; that stretch reads SSQPQSSPNSNS. 3 stretches are compositionally biased toward polar residues: residues 154 to 171, 180 to 198, and 208 to 221; these read LYRT…QHYS, STFT…SSPS, and GGSQ…NASP. Residues serine 184 and serine 192 each carry the phosphoserine modification. Residues 341-353 are compositionally biased toward basic residues; it reads HKHKSSHRSRKNR. Composition is skewed to polar residues over residues 355–373 and 436–445; these read GISQ…SGLQ and SRNSSDQQPQ.

Its function is as follows. Activator of mRNA decapping. Involved in mRNA decay via decapping. This is Protein PAT1 homolog 2 from Arabidopsis thaliana (Mouse-ear cress).